The chain runs to 299 residues: ATP phosphoribosyltransferase (299 aa).

Belongs to the ATP phosphoribosyltransferase family. Long subfamily. In terms of assembly, equilibrium between an active dimeric form, an inactive hexameric form and higher aggregates. Interconversion between the various forms is largely reversible and is influenced by the natural substrates and inhibitors of the enzyme. Mg(2+) is required as a cofactor.

It is found in the cytoplasm. It catalyses the reaction 1-(5-phospho-beta-D-ribosyl)-ATP + diphosphate = 5-phospho-alpha-D-ribose 1-diphosphate + ATP. It participates in amino-acid biosynthesis; L-histidine biosynthesis; L-histidine from 5-phospho-alpha-D-ribose 1-diphosphate: step 1/9. Its activity is regulated as follows. Feedback inhibited by histidine. In terms of biological role, catalyzes the condensation of ATP and 5-phosphoribose 1-diphosphate to form N'-(5'-phosphoribosyl)-ATP (PR-ATP). Has a crucial role in the pathway because the rate of histidine biosynthesis seems to be controlled primarily by regulation of HisG enzymatic activity. This Shigella dysenteriae serotype 1 (strain Sd197) protein is ATP phosphoribosyltransferase.